The chain runs to 619 residues: ESX-2 secretion system protein EccA2 (619 aa).

An ATP-binding site is contributed by 373–380; it reads GPPGTGKT.

Belongs to the CbxX/CfxQ family. As to quaternary structure, part of the ESX-2 / type VII secretion system (T7SS), which is composed of cytosolic and membrane components. Residues 522-619 interact with an artificial EsxB-EsxA heterodimer from the adjacent ESX-1 locus.

It is found in the cytoplasm. Shows ATPase activity. Could provide energy for export of ESX-2 substrates. In Mycobacterium tuberculosis (strain ATCC 25618 / H37Rv), this protein is ESX-2 secretion system protein EccA2 (eccA2).